Here is a 192-residue protein sequence, read N- to C-terminus: Akirin-1 (192 aa).

The disordered stretch occupies residues 17–71 (LLSPGSPKRRRCAPLPGPTPGLRPPDAEPPPPFQTQTPPQSLQQPAPPGSERRLP). The residue at position 22 (S22) is a Phosphoserine. The Nuclear localization signal motif lies at 23–28 (PKRRRC). Over residues 31-49 (LPGPTPGLRPPDAEPPPPF) the composition is skewed to pro residues. Positions 50–60 (QTQTPPQSLQQ) are enriched in low complexity. At T72 the chain carries Phosphothreonine. The span at 104 to 122 (ASESQPHSSALTAPSSPGS) shows a compositional bias: polar residues. Residues 104-127 (ASESQPHSSALTAPSSPGSSWMKK) are disordered. The SYVS motif motif lies at 189–192 (SYVS).

Belongs to the akirin family. In terms of tissue distribution, widely expressed with the highest expression in heart, liver, placenta and peripheral blood leukocytes.

The protein resides in the nucleus. In terms of biological role, molecular adapter that acts as a bridge between proteins, and which is involved skeletal muscle development. Functions as a signal transducer for MSTN during skeletal muscle regeneration and myogenesis. May regulate chemotaxis of both macrophages and myoblasts by reorganising actin cytoskeleton, leading to more efficient lamellipodia formation via a PI3 kinase dependent pathway. In contrast to AKIRIN2, not involved in nuclear import of proteasomes. The protein is Akirin-1 of Homo sapiens (Human).